The primary structure comprises 1374 residues: MTSTSPKSRKPSTKTTKSKSKSKSKSKAAKAAAASASPALARTPPQFRNRVVDKKALKQLVAWAYKTHGTAVTASMADNLKDLGFRYATQAAVSISVEDLKVPEAKQDLLCQAEAQITATEECYRLGEITEVERHTKVIDTWTETNERLVDAVKKNFNQNDPLNSVWMMANSGARGNMSQVRQLVGMRGLMANPQGEIIDLPIRTNFREGLTVTEYVISSYGARKGLVDTALRTADSGYLTRRLVDVAQDVIVREDDCGTTRGIIVKVEDGGFGSRLVGRLTADQVVNVDGEILAERNTEIDPPLSKRFEKAAITEVMVRSPLTCEANRSVCRKCYGWALAHNELADLGEAVGIIAAQSIGEPGTQLTMRTFHTGGVSTAETGVVRSTVAGTVEFGPKARVRGYRTPHGLEAQQSEVDFTLTVKPSGKGRAQRIDITTGSLLFVSDGQEIEADVTVVQIASVAVKKSVEKATKDVICDLAGQVRYEQVIQPREVKDRQGNITLKAQRLGRLWVLAGDVYNLPPNAEPVVQGNVKVERGQVLAEASQASEFGGEVRLRDSIGDSREVQIVTTSMTMKDFKLLGESTHSGELWHLEAKEGTRYRLNTIPGSKIGNGEVVAELADDRFRTQTGGLVRFAPGLAIKKARSAKNGFEVNKGGTLLWIPQETHEINKDISLLMIEDGQWIEAGTEVVKDIFSQTAGIVTVTQKNDILREIIVRSGSFHLCAETKALERFRGDGQIVNPGETIAKGINSEAMVFVQTEDTPEGTGLLLRPVEEYTIPNEAHLPELTHVKQPKGPHLGIKATQRLAFKDGELIKSVEGVELLKTQLILETFDTTPQMTVDVEAVRDKRAKTIERLRLVILESILVRRDTISDSSHGSTHTELQIEDGQSVKASDVVATTQILCKQEGIAQLPVPQEGDPVRRLIVERDEDTITVTTKGSPLVGVGQRLVDGDSLAKDEPSSCCGEVEEVEGKAITLRLGRPYMVSPDSVLHVRDGDLVQRGDGLALLVFERQKTGDIVQGLPRIEELLEARRPRESAVLCKKPGTVEIKQGEDDESITVTVIEADDAIGEYPILLGRNVMVSNGQQVHAGELLTDGPINPHELLDCFFEDLRGRKPLMDAAQEAIAKLQHRLVTEVQNVYKSQGVSIDDKHIEVIVRQMTSKVRIEDAGDTTLLPGELIELRQVEDTNQAMAITGGAPSEFTPVLLGITKASLNTDSFISAASFQETTRVLTEAAIEGKSDWLRGLKENVIIGRLIPAGTGFSGFQEELRAEAGPHPDILAEDPAGYRRMQNLRPDYTVDMPAAPAASSTAVLADPSAADLEATRSRHGIDPAASNFAAFVRPTGENELEEEQLPDPSALEGLQQEGLLTEE.

A disordered region spans residues 1–47 (MTSTSPKSRKPSTKTTKSKSKSKSKSKAAKAAAASASPALARTPPQF). Basic residues predominate over residues 7–28 (KSRKPSTKTTKSKSKSKSKSKA). Positions 29-45 (AKAAAASASPALARTPP) are enriched in low complexity. The Zn(2+) site is built by cysteine 258, cysteine 325, cysteine 332, and cysteine 335. Residues 1343–1374 (VRPTGENELEEEQLPDPSALEGLQQEGLLTEE) form a disordered region. Residues 1362 to 1374 (LEGLQQEGLLTEE) show a composition bias toward low complexity.

Belongs to the RNA polymerase beta' chain family. RpoC2 subfamily. In cyanobacteria the RNAP catalytic core is composed of 2 alpha, 1 beta, 1 beta', 1 gamma and 1 omega subunit. When a sigma factor is associated with the core the holoenzyme is formed, which can initiate transcription. It depends on Zn(2+) as a cofactor.

It catalyses the reaction RNA(n) + a ribonucleoside 5'-triphosphate = RNA(n+1) + diphosphate. In terms of biological role, DNA-dependent RNA polymerase catalyzes the transcription of DNA into RNA using the four ribonucleoside triphosphates as substrates. The sequence is that of DNA-directed RNA polymerase subunit beta' from Prochlorococcus marinus (strain MIT 9303).